Here is a 227-residue protein sequence, read N- to C-terminus: ATP-dependent dethiobiotin synthetase BioD (227 aa).

13–18 (EVGKSV) is an ATP binding site. Ser17 contacts Mg(2+). Lys38 is a catalytic residue. Ser42 contributes to the substrate binding site. ATP-binding positions include Asp55, 116 to 119 (EGAG), and 176 to 177 (ND). Mg(2+) contacts are provided by Asp55 and Glu116.

The protein belongs to the dethiobiotin synthetase family. In terms of assembly, homodimer. Mg(2+) is required as a cofactor.

Its subcellular location is the cytoplasm. The catalysed reaction is (7R,8S)-7,8-diammoniononanoate + CO2 + ATP = (4R,5S)-dethiobiotin + ADP + phosphate + 3 H(+). Its pathway is cofactor biosynthesis; biotin biosynthesis; biotin from 7,8-diaminononanoate: step 1/2. Its function is as follows. Catalyzes a mechanistically unusual reaction, the ATP-dependent insertion of CO2 between the N7 and N8 nitrogen atoms of 7,8-diaminopelargonic acid (DAPA, also called 7,8-diammoniononanoate) to form a ureido ring. The chain is ATP-dependent dethiobiotin synthetase BioD from Serratia marcescens.